A 315-amino-acid polypeptide reads, in one-letter code: Probable inactive acetaldehyde dehydrogenase 1 (315 aa).

Residues 14–17 and Asn-288 contribute to the NAD(+) site; that span reads SGDV.

Belongs to the acetaldehyde dehydrogenase family.

This is Probable inactive acetaldehyde dehydrogenase 1 from Mycolicibacterium vanbaalenii (strain DSM 7251 / JCM 13017 / BCRC 16820 / KCTC 9966 / NRRL B-24157 / PYR-1) (Mycobacterium vanbaalenii).